Reading from the N-terminus, the 326-residue chain is MATTERKPLLLDFEKPLAELANRIDQIRQLAEENGVDVSGEIRKLETRAMQLREEIFSTLSPSQRLQVARHPRRPSTLDYIQAISDEWMELHGDRCGGDDPALIGGVARLGGKPVVILGHQKGRDTKDNIARNFGMATPGGYRKAMRLMEHANKFSMPILTFIDTPGALPTVVAERQGAGEAIAYNLREMFSLDVPIICTVIGEGGSGGALGIGVGDRLLMFEHSVYTVATPEACAAILWKDASKSPQAAVALKIVSHDLKNLGIIDQILPEPTGGAHSDPLTAATTLKQALLDNLDELDRLTSQERRQLRYDKFRKIGVFTEVAH.

Residues 44–298 (KLETRAMQLR…KQALLDNLDE (255 aa)) form the CoA carboxyltransferase C-terminal domain.

Belongs to the AccA family. In terms of assembly, acetyl-CoA carboxylase is a heterohexamer composed of biotin carboxyl carrier protein (AccB), biotin carboxylase (AccC) and two subunits each of ACCase subunit alpha (AccA) and ACCase subunit beta (AccD).

Its subcellular location is the cytoplasm. The catalysed reaction is N(6)-carboxybiotinyl-L-lysyl-[protein] + acetyl-CoA = N(6)-biotinyl-L-lysyl-[protein] + malonyl-CoA. The protein operates within lipid metabolism; malonyl-CoA biosynthesis; malonyl-CoA from acetyl-CoA: step 1/1. Functionally, component of the acetyl coenzyme A carboxylase (ACC) complex. First, biotin carboxylase catalyzes the carboxylation of biotin on its carrier protein (BCCP) and then the CO(2) group is transferred by the carboxyltransferase to acetyl-CoA to form malonyl-CoA. The polypeptide is Acetyl-coenzyme A carboxylase carboxyl transferase subunit alpha (Nostoc sp. (strain PCC 7120 / SAG 25.82 / UTEX 2576)).